We begin with the raw amino-acid sequence, 122 residues long: MTRPSLVRCYSLFFTALIVMAIICPAWSEEIPKSRKKRAIPIAYVGMAVAPQVFRWLVRAYGAAAVTAAGVTLRRVINRSRSNDNHSCYGNRGWCRSSCRSYEREYRGGNLGVCGSYKCCVT.

An N-terminal signal peptide occupies residues 1–28 (MTRPSLVRCYSLFFTALIVMAIICPAWS). Residues 29 to 34 (EEIPKS) constitute a propeptide that is removed on maturation. 3 cysteine pairs are disulfide-bonded: C88–C119, C95–C114, and C99–C120.

The protein belongs to the big defensin family. As to expression, expressed in hemocytes.

It is found in the secreted. In terms of biological role, significantly inhibits the growth of Gram-negative and Gram-positive bacteria and fungi in vitro. In Argopecten irradians (Bay scallop), this protein is Big defensin.